Here is a 147-residue protein sequence, read N- to C-terminus: Hemoglobin subunit gamma (147 aa).

Positions 3 to 147 (DFTAEEKAAI…VASAVARKYH (145 aa)) constitute a Globin domain. Heme b is bound by residues His-64 and His-93.

It belongs to the globin family. In terms of assembly, heterotetramer of two alpha chains and two gamma chains in fetal hemoglobin (Hb F). As to expression, red blood cells.

Its function is as follows. Gamma chains make up the fetal hemoglobin F, in combination with alpha chains. The chain is Hemoglobin subunit gamma (HBG) from Trichechus manatus (Caribbean manatee).